Here is a 784-residue protein sequence, read N- to C-terminus: LPS-assembly protein LptD (784 aa).

The N-terminal stretch at 1-24 (MKKRIPTLLATMIASALYSHQGLA) is a signal peptide. Disulfide bonds link cysteine 31/cysteine 724 and cysteine 173/cysteine 725.

This sequence belongs to the LptD family. In terms of assembly, component of the lipopolysaccharide transport and assembly complex. Interacts with LptE and LptA. In terms of processing, contains two intramolecular disulfide bonds.

The protein resides in the cell outer membrane. Together with LptE, is involved in the assembly of lipopolysaccharide (LPS) at the surface of the outer membrane. The sequence is that of LPS-assembly protein LptD from Salmonella paratyphi A (strain ATCC 9150 / SARB42).